The following is a 1001-amino-acid chain: 2-oxoglutarate dehydrogenase E1 component (1001 aa).

This sequence belongs to the alpha-ketoglutarate dehydrogenase family. Homodimer. Part of the 2-oxoglutarate dehydrogenase (OGDH) complex composed of E1 (2-oxoglutarate dehydrogenase), E2 (dihydrolipoamide succinyltransferase) and E3 (dihydrolipoamide dehydrogenase); the complex contains multiple copies of the three enzymatic components (E1, E2 and E3). Thiamine diphosphate is required as a cofactor.

The enzyme catalyses N(6)-[(R)-lipoyl]-L-lysyl-[protein] + 2-oxoglutarate + H(+) = N(6)-[(R)-S(8)-succinyldihydrolipoyl]-L-lysyl-[protein] + CO2. Its function is as follows. E1 component of the 2-oxoglutarate dehydrogenase (OGDH) complex which catalyzes the decarboxylation of 2-oxoglutarate, the first step in the conversion of 2-oxoglutarate to succinyl-CoA and CO(2). The chain is 2-oxoglutarate dehydrogenase E1 component from Brucella anthropi (strain ATCC 49188 / DSM 6882 / CCUG 24695 / JCM 21032 / LMG 3331 / NBRC 15819 / NCTC 12168 / Alc 37) (Ochrobactrum anthropi).